The following is a 108-amino-acid chain: uncharacterized protein (108 aa).

The signal sequence occupies residues Met-1–Ala-24.

To M.jannaschii MJ0803.

This is an uncharacterized protein from Methanocaldococcus jannaschii (strain ATCC 43067 / DSM 2661 / JAL-1 / JCM 10045 / NBRC 100440) (Methanococcus jannaschii).